A 372-amino-acid polypeptide reads, in one-letter code: Chaperone protein DnaJ (372 aa).

The J domain occupies 5–69 (DYYEVLGVSK…DKRKQYDQFG (65 aa)). Residues 139–221 (GVDKIIELDL…CKGKGKYLER (83 aa)) form a CR-type zinc finger. Zn(2+)-binding residues include Cys152, Cys155, Cys169, Cys172, Cys195, Cys198, Cys209, and Cys212. CXXCXGXG motif repeat units lie at residues 152-159 (CSVCFGSG), 169-176 (CNNCHGTG), 195-202 (CNVCNGAG), and 209-216 (CKNCKGKG).

Belongs to the DnaJ family. As to quaternary structure, homodimer. The cofactor is Zn(2+).

The protein resides in the cytoplasm. In terms of biological role, participates actively in the response to hyperosmotic and heat shock by preventing the aggregation of stress-denatured proteins and by disaggregating proteins, also in an autonomous, DnaK-independent fashion. Unfolded proteins bind initially to DnaJ; upon interaction with the DnaJ-bound protein, DnaK hydrolyzes its bound ATP, resulting in the formation of a stable complex. GrpE releases ADP from DnaK; ATP binding to DnaK triggers the release of the substrate protein, thus completing the reaction cycle. Several rounds of ATP-dependent interactions between DnaJ, DnaK and GrpE are required for fully efficient folding. Also involved, together with DnaK and GrpE, in the DNA replication of plasmids through activation of initiation proteins. This Mycoplasma mycoides subsp. mycoides SC (strain CCUG 32753 / NCTC 10114 / PG1) protein is Chaperone protein DnaJ.